The chain runs to 255 residues: Probable transcriptional regulatory protein CMM_1817 (255 aa).

The protein belongs to the TACO1 family.

It localises to the cytoplasm. In Clavibacter michiganensis subsp. michiganensis (strain NCPPB 382), this protein is Probable transcriptional regulatory protein CMM_1817.